Reading from the N-terminus, the 257-residue chain is Phosphate import ATP-binding protein PstB (257 aa).

The ABC transporter domain occupies 5-246 (LEIKDLTAFY…EVIFTSPKNE (242 aa)). 37–44 (GPSGCGKS) contributes to the ATP binding site.

This sequence belongs to the ABC transporter superfamily. Phosphate importer (TC 3.A.1.7) family. In terms of assembly, the complex is composed of two ATP-binding proteins (PstB), two transmembrane proteins (PstC and PstA) and a solute-binding protein (PstS).

It localises to the cell membrane. The enzyme catalyses phosphate(out) + ATP + H2O = ADP + 2 phosphate(in) + H(+). Functionally, part of the ABC transporter complex PstSACB involved in phosphate import. Responsible for energy coupling to the transport system. The protein is Phosphate import ATP-binding protein PstB of Tropheryma whipplei (strain TW08/27) (Whipple's bacillus).